The chain runs to 558 residues: Inositol-3-phosphate synthase (558 aa).

The tract at residues 1–34 is disordered; that stretch reads MSPTALDACDHHDSFSLPAQDQSKVHPSARRTPE. NAD(+)-binding residues include G99, G100, N101, N102, D174, S210, I211, Q221, R224, T262, A263, N264, T265, G313, S314, D338, S341, N372, N373, D374, K387, G439, D440, D468, and S469.

This sequence belongs to the myo-inositol 1-phosphate synthase family. Homotetramer. It depends on NAD(+) as a cofactor.

The protein localises to the cytoplasm. It carries out the reaction D-glucose 6-phosphate = 1D-myo-inositol 3-phosphate. The protein operates within polyol metabolism; myo-inositol biosynthesis; myo-inositol from D-glucose 6-phosphate: step 1/2. Its function is as follows. Key enzyme in myo-inositol biosynthesis pathway that catalyzes the conversion of glucose 6-phosphate to 1-myo-inositol 1-phosphate in a NAD-dependent manner. Rate-limiting enzyme in the synthesis of all inositol-containing compounds. This chain is Inositol-3-phosphate synthase, found in Cryptococcus neoformans var. grubii serotype A (strain H99 / ATCC 208821 / CBS 10515 / FGSC 9487) (Filobasidiella neoformans var. grubii).